The following is a 392-amino-acid chain: 23S rRNA (uracil(747)-C(5))-methyltransferase RlmC (392 aa).

Cys-4, Cys-12, Cys-15, and Cys-93 together coordinate [4Fe-4S] cluster. Positions 218, 247, 275, and 321 each coordinate S-adenosyl-L-methionine. Residue Cys-348 is the Nucleophile of the active site.

It belongs to the class I-like SAM-binding methyltransferase superfamily. RNA M5U methyltransferase family. RlmC subfamily.

It carries out the reaction uridine(747) in 23S rRNA + S-adenosyl-L-methionine = 5-methyluridine(747) in 23S rRNA + S-adenosyl-L-homocysteine + H(+). Catalyzes the formation of 5-methyl-uridine at position 747 (m5U747) in 23S rRNA. This is 23S rRNA (uracil(747)-C(5))-methyltransferase RlmC from Haemophilus influenzae (strain PittEE).